An 824-amino-acid chain; its full sequence is Leucine--tRNA ligase (824 aa).

The short motif at 42–52 (PYPSGKIHMGH) is the 'HIGH' region element. Positions 581–585 (KMSKS) match the 'KMSKS' region motif. Residue Lys584 participates in ATP binding.

This sequence belongs to the class-I aminoacyl-tRNA synthetase family.

It localises to the cytoplasm. It catalyses the reaction tRNA(Leu) + L-leucine + ATP = L-leucyl-tRNA(Leu) + AMP + diphosphate. The protein is Leucine--tRNA ligase of Geobacter sp. (strain M21).